We begin with the raw amino-acid sequence, 98 residues long: UPF0235 protein Asuc_1977 (98 aa).

Belongs to the UPF0235 family.

The polypeptide is UPF0235 protein Asuc_1977 (Actinobacillus succinogenes (strain ATCC 55618 / DSM 22257 / CCUG 43843 / 130Z)).